A 119-amino-acid chain; its full sequence is Large ribosomal subunit protein uL18 (119 aa).

It belongs to the universal ribosomal protein uL18 family. In terms of assembly, part of the 50S ribosomal subunit; part of the 5S rRNA/L5/L18/L25 subcomplex. Contacts the 5S and 23S rRNAs.

Its function is as follows. This is one of the proteins that bind and probably mediate the attachment of the 5S RNA into the large ribosomal subunit, where it forms part of the central protuberance. The polypeptide is Large ribosomal subunit protein uL18 (Cupriavidus metallidurans (strain ATCC 43123 / DSM 2839 / NBRC 102507 / CH34) (Ralstonia metallidurans)).